The following is a 160-amino-acid chain: SsrA-binding protein (160 aa).

This sequence belongs to the SmpB family.

Its subcellular location is the cytoplasm. Functionally, required for rescue of stalled ribosomes mediated by trans-translation. Binds to transfer-messenger RNA (tmRNA), required for stable association of tmRNA with ribosomes. tmRNA and SmpB together mimic tRNA shape, replacing the anticodon stem-loop with SmpB. tmRNA is encoded by the ssrA gene; the 2 termini fold to resemble tRNA(Ala) and it encodes a 'tag peptide', a short internal open reading frame. During trans-translation Ala-aminoacylated tmRNA acts like a tRNA, entering the A-site of stalled ribosomes, displacing the stalled mRNA. The ribosome then switches to translate the ORF on the tmRNA; the nascent peptide is terminated with the 'tag peptide' encoded by the tmRNA and targeted for degradation. The ribosome is freed to recommence translation, which seems to be the essential function of trans-translation. This is SsrA-binding protein from Yersinia pseudotuberculosis serotype O:1b (strain IP 31758).